We begin with the raw amino-acid sequence, 1138 residues long: Myelin regulatory factor (1138 aa).

Residues 1-768 (MEVVDETEAL…CISQRFLQGT (768 aa)) are Cytoplasmic-facing. Disordered regions lie at residues 56-150 (TASF…YSPQ), 171-200 (VSSR…HYPV), 246-267 (AELP…NTLN), and 279-339 (PGTV…SDSL). Positions 67–88 (PGSSGLHHLSPPGSGPSPGRHG) are enriched in low complexity. Position 123 is an N6-acetyllysine (Lys-123). Residues 178-198 (PPPPPAHLPGPPPPPPPPPHY) show a composition bias toward pro residues. A DNA-binding region (NDT80) is located at residues 250–541 (PHPSKKRKHS…SNPGQFESDS (292 aa)). Positions 254–257 (KKRK) match the Nuclear localization signal motif. Residues 286-302 (PPHPARAPSPPWPPQGP) are compositionally biased toward pro residues. A compositionally biased stretch (low complexity) spans 329 to 339 (SPGLLQDSDSL). The short motif at 491 to 494 (KKGK) is the Nuclear localization signal element. The Peptidase S74 domain occupies 587-696 (SDLRAKEHVQ…KLTDNLETRI (110 aa)). The stretch at 680–711 (GAVKELCKLTDNLETRIDELERWSHKLAKLRR) forms a coiled coil. The span at 721–733 (SGAFSHAGSQFSR) shows a compositional bias: polar residues. Residues 721-753 (SGAFSHAGSQFSRAGSVPHKKRPPKLANKSSPA) form a disordered region. Residues 765 to 1003 (LQGTIIALVV…QGQLDPAPSL (239 aa)) are required for interaction with TMEM98. The chain crosses the membrane as a helical span at residues 769 to 789 (IIALVVVMAFSVVSMSTLYVL). The Lumenal portion of the chain corresponds to 790–1138 (SLRSEEDLVD…YYFHFYRLCD (349 aa)). The segment covering 891 to 900 (ATDPALGPTL) has biased composition (low complexity). Disordered stretches follow at residues 891–922 (ATDP…APLP) and 951–999 (ASPV…QLDP). Composition is skewed to polar residues over residues 961 to 974 (QSKT…NLQS) and 987 to 999 (PAQF…QLDP). Residues Asn-1030, Asn-1052, and Asn-1116 are each glycosylated (N-linked (GlcNAc...) asparagine).

The protein belongs to the MRF family. Homotrimer. Interacts (via C-terminal region) with TMEM98; the interaction inhibits MYRF self-cleavage. Glycosylated. In terms of processing, follows autocatalytic cleavage via the peptidase S74 domain. Autoprocessing is apparently constitutive and is essential for transcriptional activity. Autocatalytic cleavage is inhibited by interaction with TMEM98. As to expression, specifically expressed by postmitotic oligodendrocytes in the CNS. Not detected in the peripheral nervous system (PNS).

The protein resides in the endoplasmic reticulum membrane. It is found in the nucleus. Its subcellular location is the cytoplasm. In terms of biological role, constitutes a precursor of the transcription factor. Mediates the autocatalytic cleavage that releases the Myelin regulatory factor, N-terminal component that specifically activates transcription of central nervous system (CNS) myelin genes. Functionally, membrane-bound part that has no transcription factor activity and remains attached to the endoplasmic reticulum membrane following cleavage. Its function is as follows. Transcription factor that specifically activates expression of myelin genes such as MBP, MOG, MAG, DUSP15 and PLP1 during oligodendrocyte (OL) maturation, thereby playing a central role in oligodendrocyte maturation and CNS myelination. Specifically recognizes and binds DNA sequence 5'-CTGGYAC-3' in the regulatory regions of myelin-specific genes and directly activates their expression. Not only required during oligodendrocyte differentiation but is also required on an ongoing basis for the maintenance of expression of myelin genes and for the maintenance of a mature, viable oligodendrocyte phenotype. In Mus musculus (Mouse), this protein is Myelin regulatory factor (Myrf).